The primary structure comprises 125 residues: Small ribosomal subunit protein uS13 (125 aa).

This sequence belongs to the universal ribosomal protein uS13 family. As to quaternary structure, part of the 30S ribosomal subunit. Forms a loose heterodimer with protein S19. Forms two bridges to the 50S subunit in the 70S ribosome.

Its function is as follows. Located at the top of the head of the 30S subunit, it contacts several helices of the 16S rRNA. In the 70S ribosome it contacts the 23S rRNA (bridge B1a) and protein L5 of the 50S subunit (bridge B1b), connecting the 2 subunits; these bridges are implicated in subunit movement. Contacts the tRNAs in the A and P-sites. The sequence is that of Small ribosomal subunit protein uS13 from Gluconobacter oxydans (strain 621H) (Gluconobacter suboxydans).